Here is a 123-residue protein sequence, read N- to C-terminus: Small ribosomal subunit protein uS12 (123 aa).

The disordered stretch occupies residues 9 to 32 (ANPREVQKSRKKVPALQQSPQKRG). D89 carries the post-translational modification 3-methylthioaspartic acid.

Belongs to the universal ribosomal protein uS12 family. In terms of assembly, part of the 30S ribosomal subunit. Contacts proteins S8 and S17. May interact with IF1 in the 30S initiation complex.

In terms of biological role, with S4 and S5 plays an important role in translational accuracy. Its function is as follows. Interacts with and stabilizes bases of the 16S rRNA that are involved in tRNA selection in the A site and with the mRNA backbone. Located at the interface of the 30S and 50S subunits, it traverses the body of the 30S subunit contacting proteins on the other side and probably holding the rRNA structure together. The combined cluster of proteins S8, S12 and S17 appears to hold together the shoulder and platform of the 30S subunit. This chain is Small ribosomal subunit protein uS12, found in Bradyrhizobium sp. (strain BTAi1 / ATCC BAA-1182).